A 687-amino-acid polypeptide reads, in one-letter code: Adhesion G-protein coupled receptor G1 (687 aa).

The N-terminal stretch at 1–25 is a signal peptide; sequence MAVQVLRQMVYFLLSLFSLVQGAHS. 26–33 serves as a coordination point for heparin; sequence GSPREDFR. At 26 to 402 the chain is on the extracellular side; the sequence is GSPREDFRFC…TEVEATHKHY (377 aa). Disulfide bonds link cysteine 35-cysteine 91 and cysteine 121-cysteine 177. N-linked (GlcNAc...) asparagine glycans are attached at residues asparagine 39, asparagine 148, and asparagine 171. 190-200 lines the heparin pocket; it reads LQHPQKAAKRP. Residues 224 to 395 enclose the GAIN-B domain; that stretch reads DTLSFEEDRV…AVLMVSSTEV (172 aa). Asparagine 234, asparagine 303, asparagine 324, and asparagine 341 each carry an N-linked (GlcNAc...) asparagine glycan. 2 disulfide bridges follow: cysteine 346–cysteine 377 and cysteine 366–cysteine 379. The interval 346-395 is GPS; sequence CVFWVEDPASSSTGSWSSAGCETVSRDTQTSCLCNHLTYFAVLMVSSTEV. Residues 384–397 form a stachel region; it reads YFAVLMVSSTEVEA. A helical transmembrane segment spans residues 403–423; that stretch reads LTLLSYVGCVISALACVFTIA. Over 424 to 442 the chain is Cytoplasmic; the sequence is AYLCSRRKSRDYTIKVHMN. Residues 443 to 463 traverse the membrane as a helical segment; the sequence is LLSAVFLLDVSFLLSEPVALT. The Extracellular portion of the chain corresponds to 464–471; sequence GSEAACRT. The chain crosses the membrane as a helical span at residues 472-492; that stretch reads SAMFLHFSLLACLSWMGLEGY. Topologically, residues 493–512 are cytoplasmic; sequence NLYRLVVEVFGTYVPGYLLK. Residues 513–533 form a helical membrane-spanning segment; sequence LSIVGWGFPVFLVTLVALVDV. Residues 534 to 570 lie on the Extracellular side of the membrane; the sequence is NNYGPIILAVRRTPERVTYPSMCWIRDSLVSYVTNLG. The chain crosses the membrane as a helical span at residues 571 to 591; that stretch reads LFSLVFLFNLAMLATMVVQIL. Topologically, residues 592–603 are cytoplasmic; that stretch reads RLRPHSQNWPHV. A helical membrane pass occupies residues 604–624; that stretch reads LTLLGLSLVLGLPWALVFFSF. The Extracellular segment spans residues 625–630; the sequence is ASGTFQ. The helical transmembrane segment at 631 to 651 threads the bilayer; that stretch reads LVILYLFSIITSFQGFLIFLW. Residues 652-687 are Cytoplasmic-facing; the sequence is YWSMRFQAQGGPSPLKNNSDSAKLPISSGSTSSSRI. The tract at residues 664–687 is disordered; that stretch reads SPLKNNSDSAKLPISSGSTSSSRI. Residues 678 to 687 show a composition bias toward low complexity; sequence SSGSTSSSRI.

It belongs to the G-protein coupled receptor 2 family. LN-TM7 subfamily. In terms of assembly, heterodimer of 2 chains generated by proteolytic processing; the large extracellular N-terminal fragment (ADGRG1 NT) and the membrane-bound C-terminal fragment (ADGRG1-CT) predominantly remain associated and non-covalently linked. ADGRG1 NT self-associates in a trans-trans manner; the homophilic interaction enhances receptor signaling. Interacts with TGM2. Interacts with heparin; leading to the reduction of ADGRG1 shedding. Interacts with COL3A1. Part of a GPCR-tetraspanin complex at least consisting of ADGRG1, CD81, eventually CD9, and GNA11 in which CD81 is enhancing the association of ADGRG1 with GNA11. Post-translationally, autoproteolytically cleaved into 2 fragments; the large extracellular N-terminal fragment and the membroune-bound C-terminal fragment predominantly remain associated and non-covalently linked. In terms of processing, N-glycosylated. The secreted ADGRG1 N-terminal fragment is heavily glycosylated. Ubiquitinated. Undergoes polyubiquitination upon activation. Expressed in neural progenitor cells in fetal forbrain. Expressed in migrating neurons. Expressed in radial glial endfeet (at protein level). Expressed in peritubular myoid cells, Sertoli cells, and germ cells of the testis.

Its subcellular location is the cell membrane. The protein resides in the secreted. The protein localises to the membrane raft. Its activity is regulated as follows. Forms a heterodimer of 2 chains generated by proteolytic processing that remain associated through non-covalent interactions mediated by the GAIN-B domain. In the inactivated receptor, the Stachel sequence (also named stalk) is embedded in the GAIN-B domain, where it adopts a beta-strand conformation. On activation, the Stachel moves into the 7 transmembrane region and adopts a twisted hook-shaped configuration that forms contacts within the receptor, leading to coupling of a G-alpha protein, which activates signaling. The cleaved GAIN-B and N-terminal domains can then dissociate from the rest of the receptor. Activated by the small-molecule agonist, 3-alpha-acetoxydihydrodeoxygedunin (3-alpha-DOG). Functionally, adhesion G-protein coupled receptor (aGPCR) for steroid hormone 17alpha-hydroxypregnenolone (17-OH), which is involved in cell adhesion and cell-cell interactions. Ligand binding causes a conformation change that triggers signaling via guanine nucleotide-binding proteins (G proteins) and modulates the activity of downstream effectors, such as RhoA pathway. ADGRG1 is coupled to G(12) and/or G(13) G proteins (GNA12 and GNA13, respectively) and mediates the activation Rho small GTPases. Acts as a potent suppressor of ferroptosis: binding to 17-OH-binding initiates signaling that down-regulates CD36 and alleviates ferroptosis-induced liver injury. Ligand-binding also induces cell adhesion activity via association with proteins such as collagen III/COL3A1 and TGM2. Mediates cell matrix adhesion in developing neurons and hematopoietic stem cells. Involved in cortical development, specifically in maintenance of the pial basement membrane integrity and in cortical lamination: association with COL3A1 in the developing brain inhibits neuronal migration via activation of the RhoA pathway. Together with TGM2, acts as a regulator of myelination and myelin repair in oligodendrocyte precursor cells. Acts as a hemostatic sensor of shear force: G protein-coupled receptor signaling is activated in response to shear force in platelets, promoting G(13) G protein signaling, and platelet shape change and aggregation in a COL3A1-dependent manner. Acts as an inhibitor of VEGFA production thereby inhibiting angiogenesis through a signaling pathway mediated by PRKCA. Plays a role in the maintenance of hematopoietic stem cells in bone marrow niche. Plays an essential role in testis development. Its function is as follows. Adhesion G-protein coupled receptor (aGPCR) for phosphatidylserine, which is involved in microglia-mediated synapse pruning during development. Required to maintain appropriate synaptic numbers in several brain regions in a time- and circuit-dependent fashion: phosphatidylserine-binding acts as a 'eat-me' signal for apoptotic cells, leading to microglial engulfment of phosphatidylserine-positive synapses. In Mus musculus (Mouse), this protein is Adhesion G-protein coupled receptor G1.